The sequence spans 508 residues: GTPase Obg (508 aa).

One can recognise an Obg domain in the interval 2-159 (ARFVDRVVLH…HDVILELKSM (158 aa)). An OBG-type G domain is found at 160-341 (ADIGLVGFPS…LKYAMLDLVQ (182 aa)). GTP contacts are provided by residues 166 to 173 (GFPSAGKS), 191 to 195 (FTTLQ), 212 to 215 (DVPG), 292 to 295 (NKAD), and 322 to 324 (SAV). Residues S173 and T193 each coordinate Mg(2+). The OCT domain occupies 364–444 (DARKKNKDFE…IGEVSFEWEP (81 aa)).

Belongs to the TRAFAC class OBG-HflX-like GTPase superfamily. OBG GTPase family. In terms of assembly, monomer. Mg(2+) serves as cofactor.

The protein localises to the cytoplasm. An essential GTPase which binds GTP, GDP and possibly (p)ppGpp with moderate affinity, with high nucleotide exchange rates and a fairly low GTP hydrolysis rate. Plays a role in control of the cell cycle, stress response, ribosome biogenesis and in those bacteria that undergo differentiation, in morphogenesis control. The protein is GTPase Obg of Corynebacterium diphtheriae (strain ATCC 700971 / NCTC 13129 / Biotype gravis).